A 201-amino-acid polypeptide reads, in one-letter code: Recombination protein RecR (201 aa).

The C4-type zinc-finger motif lies at 58–73; that stretch reads CEQCASITDTCPCRIC. In terms of domain architecture, Toprim spans 81–178; sequence DKLCLVSEWD…ELSRLAQGIP (98 aa).

Belongs to the RecR family.

May play a role in DNA repair. It seems to be involved in an RecBC-independent recombinational process of DNA repair. It may act with RecF and RecO. In Maridesulfovibrio salexigens (strain ATCC 14822 / DSM 2638 / NCIMB 8403 / VKM B-1763) (Desulfovibrio salexigens), this protein is Recombination protein RecR.